The chain runs to 287 residues: Phosphatidylserine decarboxylase proenzyme (287 aa).

Catalysis depends on charge relay system; for autoendoproteolytic cleavage activity residues Asp-89, His-146, and Ser-252. The active-site Schiff-base intermediate with substrate; via pyruvic acid; for decarboxylase activity is the Ser-252. Pyruvic acid (Ser); by autocatalysis is present on Ser-252.

This sequence belongs to the phosphatidylserine decarboxylase family. PSD-B subfamily. Prokaryotic type I sub-subfamily. In terms of assembly, heterodimer of a large membrane-associated beta subunit and a small pyruvoyl-containing alpha subunit. Requires pyruvate as cofactor. Post-translationally, is synthesized initially as an inactive proenzyme. Formation of the active enzyme involves a self-maturation process in which the active site pyruvoyl group is generated from an internal serine residue via an autocatalytic post-translational modification. Two non-identical subunits are generated from the proenzyme in this reaction, and the pyruvate is formed at the N-terminus of the alpha chain, which is derived from the carboxyl end of the proenzyme. The autoendoproteolytic cleavage occurs by a canonical serine protease mechanism, in which the side chain hydroxyl group of the serine supplies its oxygen atom to form the C-terminus of the beta chain, while the remainder of the serine residue undergoes an oxidative deamination to produce ammonia and the pyruvoyl prosthetic group on the alpha chain. During this reaction, the Ser that is part of the protease active site of the proenzyme becomes the pyruvoyl prosthetic group, which constitutes an essential element of the active site of the mature decarboxylase.

The protein resides in the cell membrane. It catalyses the reaction a 1,2-diacyl-sn-glycero-3-phospho-L-serine + H(+) = a 1,2-diacyl-sn-glycero-3-phosphoethanolamine + CO2. It functions in the pathway phospholipid metabolism; phosphatidylethanolamine biosynthesis; phosphatidylethanolamine from CDP-diacylglycerol: step 2/2. Functionally, catalyzes the formation of phosphatidylethanolamine (PtdEtn) from phosphatidylserine (PtdSer). The sequence is that of Phosphatidylserine decarboxylase proenzyme from Shewanella sediminis (strain HAW-EB3).